The primary structure comprises 349 residues: Phosphoribosylformylglycinamidine cyclo-ligase (349 aa).

Belongs to the AIR synthase family.

It localises to the cytoplasm. It carries out the reaction 2-formamido-N(1)-(5-O-phospho-beta-D-ribosyl)acetamidine + ATP = 5-amino-1-(5-phospho-beta-D-ribosyl)imidazole + ADP + phosphate + H(+). It participates in purine metabolism; IMP biosynthesis via de novo pathway; 5-amino-1-(5-phospho-D-ribosyl)imidazole from N(2)-formyl-N(1)-(5-phospho-D-ribosyl)glycinamide: step 2/2. The chain is Phosphoribosylformylglycinamidine cyclo-ligase from Lawsonia intracellularis (strain PHE/MN1-00).